Reading from the N-terminus, the 194-residue chain is Large ribosomal subunit protein bL9 (194 aa).

The segment covering 166–184 (AENQAQADEQAGELAAAAA) has biased composition (low complexity). The disordered stretch occupies residues 166 to 194 (AENQAQADEQAGELAAAAAERGDMGGDEE). Residues 185-194 (ERGDMGGDEE) show a composition bias toward basic and acidic residues.

Belongs to the bacterial ribosomal protein bL9 family.

Binds to the 23S rRNA. This Hyphomonas neptunium (strain ATCC 15444) protein is Large ribosomal subunit protein bL9.